Here is a 72-residue protein sequence, read N- to C-terminus: Aurein-2.2 (72 aa).

A signal peptide spans M1–C22. Residues E23–R49 constitute a propeptide that is removed on maturation. The interval R27–E47 is disordered. Positions A38–E47 are enriched in basic and acidic residues. Residue L65 is modified to Leucine amide. Positions N69–E72 are excised as a propeptide.

In terms of processing, amidation is essential for antibacterial activity against Gram-positive bacteria. As to expression, expressed by the skin dorsal glands.

Its subcellular location is the secreted. The protein resides in the target cell membrane. Amphipathic alpha-helical antimicrobial peptide with weak to moderate activity against Gram-positive bacteria, and no activity against Gram-negative bacteria. Probably acts by disturbing membrane functions with its amphipathic structure. Strongly inhibits the formation of NO by neuronal nitric oxide synthase (nNOS) at micromolar concentrations. Acts by a non-competitive mechanism, probably by binding to calcium/calmodulin and as a consequence blocking calmodulin attachment to nNOS. The polypeptide is Aurein-2.2 (Ranoidea aurea (Green and golden bell frog)).